Here is a 475-residue protein sequence, read N- to C-terminus: MSPKTETKASVGFKAGVKDYRLTYYTPEYQTKDTDILAAFRVTPQPGVPPEEAGAAVAAESSTGTWTTVWTDGLTSLDRYKGRCYDIEPVPGEENQFIAYVAYPLDLFEEGSVTNMFTSIVGNVFGFKALRALRLEDLRVPPAYSKTFQGPPHGIQVERDKLNKYGRPLLGCTIKPKLGLSAKNYGRAVYECLRGGLDFTKDDENVNSQPFMRWRDRFCFCAEAIYKAQAETGEIKGHYLNATAGTCEEMIKRAVFARELGVPIVMHDYLTGGFTANTSLAHYCRDNGLLLHIHRAMHAVIDRQRNHGMHFRVLAKALRMSGGDHIHAGTVVGKLEGERDVTLGFVDLLRDDFIERDRSRGIYFTQDWVSMPGVLPVASGGIHVWHMPALTEIFGDDSVLQFGGGTLGHPWGNAPGAVANRVALEACVQARNEGRDLAREGNEVIREASKWSPELAAACEVWKEIKFEFEAMDVL.

Positions 1-2 are excised as a propeptide; the sequence is MS. Pro3 is modified (N-acetylproline). Lys14 is modified (N6,N6,N6-trimethyllysine). Residues Asn123 and Thr173 each coordinate substrate. Lys175 functions as the Proton acceptor in the catalytic mechanism. Position 177 (Lys177) interacts with substrate. 3 residues coordinate Mg(2+): Lys201, Asp203, and Glu204. N6-carboxylysine is present on Lys201. His294 functions as the Proton acceptor in the catalytic mechanism. Residues Arg295, His327, and Ser379 each contribute to the substrate site.

The protein belongs to the RuBisCO large chain family. Type I subfamily. Heterohexadecamer of 8 large chains and 8 small chains; disulfide-linked. The disulfide link is formed within the large subunit homodimers. Mg(2+) is required as a cofactor. In terms of processing, the disulfide bond which can form in the large chain dimeric partners within the hexadecamer appears to be associated with oxidative stress and protein turnover.

It localises to the plastid. The protein resides in the chloroplast. It catalyses the reaction 2 (2R)-3-phosphoglycerate + 2 H(+) = D-ribulose 1,5-bisphosphate + CO2 + H2O. It carries out the reaction D-ribulose 1,5-bisphosphate + O2 = 2-phosphoglycolate + (2R)-3-phosphoglycerate + 2 H(+). RuBisCO catalyzes two reactions: the carboxylation of D-ribulose 1,5-bisphosphate, the primary event in carbon dioxide fixation, as well as the oxidative fragmentation of the pentose substrate in the photorespiration process. Both reactions occur simultaneously and in competition at the same active site. This chain is Ribulose bisphosphate carboxylase large chain, found in Cycas taitungensis (Prince sago).